Here is a 293-residue protein sequence, read N- to C-terminus: ATP phosphoribosyltransferase (293 aa).

It belongs to the ATP phosphoribosyltransferase family. Long subfamily. It depends on Mg(2+) as a cofactor.

It is found in the cytoplasm. It catalyses the reaction 1-(5-phospho-beta-D-ribosyl)-ATP + diphosphate = 5-phospho-alpha-D-ribose 1-diphosphate + ATP. It participates in amino-acid biosynthesis; L-histidine biosynthesis; L-histidine from 5-phospho-alpha-D-ribose 1-diphosphate: step 1/9. Its activity is regulated as follows. Feedback inhibited by histidine. Its function is as follows. Catalyzes the condensation of ATP and 5-phosphoribose 1-diphosphate to form N'-(5'-phosphoribosyl)-ATP (PR-ATP). Has a crucial role in the pathway because the rate of histidine biosynthesis seems to be controlled primarily by regulation of HisG enzymatic activity. In Solidesulfovibrio magneticus (strain ATCC 700980 / DSM 13731 / RS-1) (Desulfovibrio magneticus), this protein is ATP phosphoribosyltransferase.